The chain runs to 487 residues: ATP synthase subunit beta (487 aa).

Position 164-171 (164-171) interacts with ATP; it reads GGAGVGKT.

It belongs to the ATPase alpha/beta chains family. F-type ATPases have 2 components, CF(1) - the catalytic core - and CF(0) - the membrane proton channel. CF(1) has five subunits: alpha(3), beta(3), gamma(1), delta(1), epsilon(1). CF(0) has four main subunits: a(1), b(1), b'(1) and c(9-12).

Its subcellular location is the cellular thylakoid membrane. The catalysed reaction is ATP + H2O + 4 H(+)(in) = ADP + phosphate + 5 H(+)(out). Produces ATP from ADP in the presence of a proton gradient across the membrane. The catalytic sites are hosted primarily by the beta subunits. The chain is ATP synthase subunit beta from Synechococcus sp. (strain CC9311).